A 294-amino-acid polypeptide reads, in one-letter code: Ribosomal protein L11 methyltransferase (294 aa).

Residues Thr144, Gly165, Asp187, and Asn229 each contribute to the S-adenosyl-L-methionine site.

The protein belongs to the methyltransferase superfamily. PrmA family.

The protein localises to the cytoplasm. The enzyme catalyses L-lysyl-[protein] + 3 S-adenosyl-L-methionine = N(6),N(6),N(6)-trimethyl-L-lysyl-[protein] + 3 S-adenosyl-L-homocysteine + 3 H(+). Methylates ribosomal protein L11. This chain is Ribosomal protein L11 methyltransferase, found in Pseudomonas aeruginosa (strain LESB58).